A 156-amino-acid chain; its full sequence is Small ribosomal subunit protein uS7c (156 aa).

The protein belongs to the universal ribosomal protein uS7 family. Part of the 30S ribosomal subunit.

It is found in the plastid. Its subcellular location is the chloroplast. Functionally, one of the primary rRNA binding proteins, it binds directly to 16S rRNA where it nucleates assembly of the head domain of the 30S subunit. In Euglena gracilis, this protein is Small ribosomal subunit protein uS7c (rps7).